A 534-amino-acid polypeptide reads, in one-letter code: Probable bifunctional tRNA threonylcarbamoyladenosine biosynthesis protein (534 aa).

The tract at residues 1-325 is kae1; the sequence is MLCLGIEGTA…YRTDEVDVPW (325 aa). Fe cation contacts are provided by His-108, His-112, and Tyr-129. Residues 129-133, Asp-161, Gly-174, Glu-178, and Asn-258 contribute to the L-threonylcarbamoyladenylate site; that span reads YVSGG. Residue Asp-286 participates in Fe cation binding. The Protein kinase domain maps to 335–534; the sequence is LPPDILAKGA…EIESRGRYTD (200 aa). ATP contacts are provided by residues 340–348 and Lys-361; that span reads LAKGAEANI. The Proton acceptor; for kinase activity role is filled by Asp-451.

The protein in the N-terminal section; belongs to the KAE1 / TsaD family. It in the C-terminal section; belongs to the protein kinase superfamily. Tyr protein kinase family. BUD32 subfamily. Component of the KEOPS complex that consists of Kae1, Bud32, Cgi121 and Pcc1; the whole complex dimerizes. Requires Fe(2+) as cofactor.

It localises to the cytoplasm. It carries out the reaction L-seryl-[protein] + ATP = O-phospho-L-seryl-[protein] + ADP + H(+). The enzyme catalyses L-threonyl-[protein] + ATP = O-phospho-L-threonyl-[protein] + ADP + H(+). It catalyses the reaction L-threonylcarbamoyladenylate + adenosine(37) in tRNA = N(6)-L-threonylcarbamoyladenosine(37) in tRNA + AMP + H(+). Required for the formation of a threonylcarbamoyl group on adenosine at position 37 (t(6)A37) in tRNAs that read codons beginning with adenine. Is a component of the KEOPS complex that is probably involved in the transfer of the threonylcarbamoyl moiety of threonylcarbamoyl-AMP (TC-AMP) to the N6 group of A37. The Kae1 domain likely plays a direct catalytic role in this reaction. The Bud32 domain probably displays kinase activity that regulates Kae1 function. The protein is Probable bifunctional tRNA threonylcarbamoyladenosine biosynthesis protein of Methanothermobacter thermautotrophicus (strain ATCC 29096 / DSM 1053 / JCM 10044 / NBRC 100330 / Delta H) (Methanobacterium thermoautotrophicum).